A 397-amino-acid polypeptide reads, in one-letter code: Succinate--CoA ligase [ADP-forming] subunit beta (397 aa).

Positions 9-254 (KALLKSFGAP…ETEQDAKELE (246 aa)) constitute an ATP-grasp domain. Residues K46, 53-55 (GRG), E109, A112, and E117 each bind ATP. Positions 209 and 223 each coordinate Mg(2+). Substrate-binding positions include N274 and 331–333 (GIM).

This sequence belongs to the succinate/malate CoA ligase beta subunit family. Heterotetramer of two alpha and two beta subunits. The cofactor is Mg(2+).

It carries out the reaction succinate + ATP + CoA = succinyl-CoA + ADP + phosphate. The enzyme catalyses GTP + succinate + CoA = succinyl-CoA + GDP + phosphate. It participates in carbohydrate metabolism; tricarboxylic acid cycle; succinate from succinyl-CoA (ligase route): step 1/1. In terms of biological role, succinyl-CoA synthetase functions in the citric acid cycle (TCA), coupling the hydrolysis of succinyl-CoA to the synthesis of either ATP or GTP and thus represents the only step of substrate-level phosphorylation in the TCA. The beta subunit provides nucleotide specificity of the enzyme and binds the substrate succinate, while the binding sites for coenzyme A and phosphate are found in the alpha subunit. This is Succinate--CoA ligase [ADP-forming] subunit beta from Hyphomonas neptunium (strain ATCC 15444).